We begin with the raw amino-acid sequence, 270 residues long: MDHAARPGRFFGVYLLYCQNPRHRGRVYVGFTVNPARRVRQHNAGRKKGGAWRTSGRGPWDMVLIIHGFPSAVAALRFEWAWQHPQASRRLTHVGPRLRSEAAFAFHLRVLAHMLRVPPWVRLPLTLRWLRPDFRHELCPAPPAHMPIAFGPPPPQPLVPKRPAVSEADSERQLDLGTKARCSLCARLLQDEEGPLCCPHPGCPLRAHIICLAEEFLQEEPGQLLPLEGHCPSCKKSLLWGNLVGQCHADTEEEEDLELEEEHWTDLLET.

A GIY-YIG domain is found at 9-94 (RFFGVYLLYC…PQASRRLTHV (86 aa)). Residues 182 to 234 (CSLCARLLQDEEGPLCCPHPGCPLRAHIICLAEEFLQEEPGQLLPLEGHCPSC) form an SLX1-type zinc finger.

Belongs to the SLX1 family. As to quaternary structure, forms a heterodimer with SLX4. It depends on a divalent metal cation as a cofactor. In terms of tissue distribution, expressed in testis, colon, bone marrow, brain, thymus and to a lesser extent in heart, kidney, skeletal muscle and spleen.

It is found in the nucleus. Functionally, catalytic subunit of the SLX1-SLX4 structure-specific endonuclease that resolves DNA secondary structures generated during DNA repair and recombination. Has endonuclease activity towards branched DNA substrates, introducing single-strand cuts in duplex DNA close to junctions with ss-DNA. Has a preference for 5'-flap structures, and promotes symmetrical cleavage of static and migrating Holliday junctions (HJs). Resolves HJs by generating two pairs of ligatable, nicked duplex products. The protein is Structure-specific endonuclease subunit SLX1 (Slx1b) of Mus musculus (Mouse).